The chain runs to 1036 residues: Beta-galactosidase (1036 aa).

Substrate is bound by residues asparagine 97 and aspartate 197. Aspartate 197 serves as a coordination point for Na(+). Residues glutamate 411, histidine 413, and glutamate 456 each coordinate Mg(2+). Substrate is bound by residues glutamate 456 and 532–535 (EYAH). The active-site Proton donor is the glutamate 456. The active-site Nucleophile is glutamate 532. Position 592 (asparagine 592) interacts with Mg(2+). 2 residues coordinate Na(+): phenylalanine 596 and aspartate 599. Substrate contacts are provided by aspartate 599 and tryptophan 1006.

This sequence belongs to the glycosyl hydrolase 2 family. In terms of assembly, homotetramer. It depends on Mg(2+) as a cofactor. The cofactor is Na(+).

It catalyses the reaction Hydrolysis of terminal non-reducing beta-D-galactose residues in beta-D-galactosides.. This chain is Beta-galactosidase, found in Leuconostoc mesenteroides subsp. mesenteroides (strain ATCC 8293 / DSM 20343 / BCRC 11652 / CCM 1803 / JCM 6124 / NCDO 523 / NBRC 100496 / NCIMB 8023 / NCTC 12954 / NRRL B-1118 / 37Y).